Here is a 164-residue protein sequence, read N- to C-terminus: ATP synthase subunit b (164 aa).

The chain crosses the membrane as a helical span at residues 6 to 26; that stretch reads GELVGNFILVTGSVIVLLLLI.

It belongs to the ATPase B chain family. F-type ATPases have 2 components, F(1) - the catalytic core - and F(0) - the membrane proton channel. F(1) has five subunits: alpha(3), beta(3), gamma(1), delta(1), epsilon(1). F(0) has three main subunits: a(1), b(2) and c(10-14). The alpha and beta chains form an alternating ring which encloses part of the gamma chain. F(1) is attached to F(0) by a central stalk formed by the gamma and epsilon chains, while a peripheral stalk is formed by the delta and b chains.

It is found in the cell membrane. F(1)F(0) ATP synthase produces ATP from ADP in the presence of a proton or sodium gradient. F-type ATPases consist of two structural domains, F(1) containing the extramembraneous catalytic core and F(0) containing the membrane proton channel, linked together by a central stalk and a peripheral stalk. During catalysis, ATP synthesis in the catalytic domain of F(1) is coupled via a rotary mechanism of the central stalk subunits to proton translocation. In terms of biological role, component of the F(0) channel, it forms part of the peripheral stalk, linking F(1) to F(0). The sequence is that of ATP synthase subunit b from Streptococcus pyogenes serotype M1.